A 150-amino-acid chain; its full sequence is Large ribosomal subunit protein bL9 (150 aa).

The protein belongs to the bacterial ribosomal protein bL9 family.

Its function is as follows. Binds to the 23S rRNA. In Ralstonia nicotianae (strain ATCC BAA-1114 / GMI1000) (Ralstonia solanacearum), this protein is Large ribosomal subunit protein bL9.